Consider the following 845-residue polypeptide: Poly(A) RNA polymerase gld-4 (845 aa).

The tract at residues 1–55 is disordered; the sequence is MNEDSRLSSSQQPSTSTPRSSIPSTMNSDEPNTCRRLSQSQEQPSTSRTCKSETP. The span at 7–25 shows a compositional bias: low complexity; that stretch reads LSSSQQPSTSTPRSSIPST. A compositionally biased stretch (polar residues) spans 26–49; the sequence is MNSDEPNTCRRLSQSQEQPSTSRT. Positions 139 and 141 each coordinate Mg(2+). Residues 276–335 form the PAP-associated domain; it reads NLGHLLLRFLELYSLEFNFEEMGISPGQCCYIPKSASGARYGHKQAQPGNLALEDPLLTA. The segment covering 482–506 has biased composition (basic and acidic residues); sequence KSLEKMPACDDNKKEEELVATRETD. Disordered regions lie at residues 482-733 and 788-845; these read KSLE…SEEP and NALT…RLQR. Over residues 535–551 the composition is skewed to low complexity; the sequence is TSTQSVNTSATVSTAAS. Composition is skewed to polar residues over residues 561 to 571 and 579 to 588; these read PGLSSSMGNQS and GINNRNNSAV. Over residues 605–620 the composition is skewed to basic and acidic residues; sequence RESKRTQTTSEDKMQD. Basic residues predominate over residues 643–653; it reads SHKHRNAHPQR. Polar residues-rich tracts occupy residues 654-666, 695-732, 788-805, and 819-828; these read QRPS…QGSD, RQQT…SSEE, NALT…TSMQ, and DNNSATSSTD.

As to quaternary structure, interacts with gls-1 isoform C. Requires Mg(2+) as cofactor. The cofactor is Mn(2+). Germline-specific.

It localises to the cytoplasm. The protein resides in the cytoplasmic granule. Its subcellular location is the perinuclear region. It carries out the reaction RNA(n) + ATP = RNA(n)-3'-adenine ribonucleotide + diphosphate. Cytoplasmic poly(A) RNA polymerase that adds successive AMP monomers to the 3'-end of specific RNAs, forming a poly(A) tail. The enzymatic activity is enhanced by its interaction with gls-1. Required, together with gld-2, for early meiotic progression in male and female germ cells and for gld-1 protein accumulation in the hermaphrodite germline. In the germline, forms a complex with gls-1 which directly binds to gld-1 mRNA and prevents its degradation. This Caenorhabditis elegans protein is Poly(A) RNA polymerase gld-4.